Consider the following 318-residue polypeptide: ADP-L-glycero-D-manno-heptose-6-epimerase (318 aa).

NADP(+)-binding positions include 10–11 (FI), 31–32 (DD), lysine 38, lysine 53, 80–84 (EGACS), and asparagine 97. The Proton acceptor role is filled by tyrosine 144. Lysine 148 serves as a coordination point for NADP(+). Residue asparagine 173 coordinates substrate. Positions 174 and 182 each coordinate NADP(+). Lysine 182 (proton acceptor) is an active-site residue. Residues lysine 184, histidine 191, 205 to 208 (FGAW), arginine 218, and tyrosine 282 each bind substrate.

Belongs to the NAD(P)-dependent epimerase/dehydratase family. HldD subfamily. As to quaternary structure, homopentamer. It depends on NADP(+) as a cofactor.

It catalyses the reaction ADP-D-glycero-beta-D-manno-heptose = ADP-L-glycero-beta-D-manno-heptose. Its pathway is nucleotide-sugar biosynthesis; ADP-L-glycero-beta-D-manno-heptose biosynthesis; ADP-L-glycero-beta-D-manno-heptose from D-glycero-beta-D-manno-heptose 7-phosphate: step 4/4. Its function is as follows. Catalyzes the interconversion between ADP-D-glycero-beta-D-manno-heptose and ADP-L-glycero-beta-D-manno-heptose via an epimerization at carbon 6 of the heptose. In Chromohalobacter salexigens (strain ATCC BAA-138 / DSM 3043 / CIP 106854 / NCIMB 13768 / 1H11), this protein is ADP-L-glycero-D-manno-heptose-6-epimerase.